The following is a 330-amino-acid chain: Ribosomal RNA small subunit methyltransferase H (330 aa).

S-adenosyl-L-methionine-binding positions include 35–37 (GGY), D53, F80, D101, and Q108.

The protein belongs to the methyltransferase superfamily. RsmH family.

The protein resides in the cytoplasm. The enzyme catalyses cytidine(1402) in 16S rRNA + S-adenosyl-L-methionine = N(4)-methylcytidine(1402) in 16S rRNA + S-adenosyl-L-homocysteine + H(+). Specifically methylates the N4 position of cytidine in position 1402 (C1402) of 16S rRNA. The sequence is that of Ribosomal RNA small subunit methyltransferase H from Rhodopseudomonas palustris (strain BisB18).